The chain runs to 108 residues: ATP synthase peripheral stalk subunit F6, mitochondrial (108 aa).

A mitochondrion-targeting transit peptide spans 1–32 (MILQRLFRFSSVIRSAVSVHLRRNIGVTAVAF). 2 positions are modified to N6-acetyllysine: K41 and K46. The residue at position 65 (S65) is a Phosphoserine. An N6-acetyllysine modification is found at K79. N6-acetyllysine; alternate occurs at positions 94 and 99. N6-succinyllysine; alternate occurs at positions 94 and 99. K105 carries the post-translational modification N6-acetyllysine.

It belongs to the eukaryotic ATPase subunit F6 family. As to quaternary structure, component of the ATP synthase complex composed at least of ATP5F1A/subunit alpha, ATP5F1B/subunit beta, ATP5MC1/subunit c (homooctomer), MT-ATP6/subunit a, MT-ATP8/subunit 8, ATP5ME/subunit e, ATP5MF/subunit f, ATP5MG/subunit g, ATP5MK/subunit k, ATP5MJ/subunit j, ATP5F1C/subunit gamma, ATP5F1D/subunit delta, ATP5F1E/subunit epsilon, ATP5PF/subunit F6, ATP5PB/subunit b, ATP5PD/subunit d, ATP5PO/subunit OSCP. ATP synthase complex consists of a soluble F(1) head domain (subunits alpha(3) and beta(3)) - the catalytic core - and a membrane F(0) domain - the membrane proton channel (subunits c, a, 8, e, f, g, k and j). These two domains are linked by a central stalk (subunits gamma, delta, and epsilon) rotating inside the F1 region and a stationary peripheral stalk (subunits F6, b, d, and OSCP).

It localises to the mitochondrion. The protein resides in the mitochondrion inner membrane. In terms of biological role, subunit F6, of the mitochondrial membrane ATP synthase complex (F(1)F(0) ATP synthase or Complex V) that produces ATP from ADP in the presence of a proton gradient across the membrane which is generated by electron transport complexes of the respiratory chain. ATP synthase complex consist of a soluble F(1) head domain - the catalytic core - and a membrane F(1) domain - the membrane proton channel. These two domains are linked by a central stalk rotating inside the F(1) region and a stationary peripheral stalk. During catalysis, ATP synthesis in the catalytic domain of F(1) is coupled via a rotary mechanism of the central stalk subunits to proton translocation. In vivo, can only synthesize ATP although its ATP hydrolase activity can be activated artificially in vitro. Part of the complex F(0) domain. Part of the complex F(0) domain and the peripheric stalk, which acts as a stator to hold the catalytic alpha(3)beta(3) subcomplex and subunit a/ATP6 static relative to the rotary elements. This is ATP synthase peripheral stalk subunit F6, mitochondrial from Homo sapiens (Human).